Reading from the N-terminus, the 301-residue chain is Methionyl-tRNA formyltransferase (301 aa).

Position 110–113 (110–113) interacts with (6S)-5,6,7,8-tetrahydrofolate; it reads SLLP.

This sequence belongs to the Fmt family.

It catalyses the reaction L-methionyl-tRNA(fMet) + (6R)-10-formyltetrahydrofolate = N-formyl-L-methionyl-tRNA(fMet) + (6S)-5,6,7,8-tetrahydrofolate + H(+). Its function is as follows. Attaches a formyl group to the free amino group of methionyl-tRNA(fMet). The formyl group appears to play a dual role in the initiator identity of N-formylmethionyl-tRNA by promoting its recognition by IF2 and preventing the misappropriation of this tRNA by the elongation apparatus. This Anaplasma phagocytophilum (strain HZ) protein is Methionyl-tRNA formyltransferase.